The sequence spans 380 residues: tRNA(Met) cytidine acetate ligase (380 aa).

ATP contacts are provided by residues 7–20 (ITEY…HLYH), Gly100, Asn153, and Arg178.

This sequence belongs to the TmcAL family.

It localises to the cytoplasm. The enzyme catalyses cytidine(34) in elongator tRNA(Met) + acetate + ATP = N(4)-acetylcytidine(34) in elongator tRNA(Met) + AMP + diphosphate. In terms of biological role, catalyzes the formation of N(4)-acetylcytidine (ac(4)C) at the wobble position of elongator tRNA(Met), using acetate and ATP as substrates. First activates an acetate ion to form acetyladenylate (Ac-AMP) and then transfers the acetyl group to tRNA to form ac(4)C34. The polypeptide is tRNA(Met) cytidine acetate ligase (Staphylococcus haemolyticus (strain JCSC1435)).